Here is a 90-residue protein sequence, read N- to C-terminus: MSRTIFCTFLKKDAERQDFQLYPGEIGKRIYNEISKEAWSQWITKQTMLINEKKLSMMNIEDRKLLEQEMVNFLFEGQDVHIAGYTPPSK.

It belongs to the Fe(2+)-trafficking protein family. Monomer.

Functionally, could be a mediator in iron transactions between iron acquisition and iron-requiring processes, such as synthesis and/or repair of Fe-S clusters in biosynthetic enzymes. This chain is Probable Fe(2+)-trafficking protein, found in Yersinia pestis bv. Antiqua (strain Antiqua).